The chain runs to 259 residues: Hydroxyacylglutathione hydrolase (259 aa).

Zn(2+) contacts are provided by H56, H58, D60, H61, H112, D133, and H171.

Belongs to the metallo-beta-lactamase superfamily. Glyoxalase II family. Monomer. Requires Zn(2+) as cofactor.

It catalyses the reaction an S-(2-hydroxyacyl)glutathione + H2O = a 2-hydroxy carboxylate + glutathione + H(+). The protein operates within secondary metabolite metabolism; methylglyoxal degradation; (R)-lactate from methylglyoxal: step 2/2. In terms of biological role, thiolesterase that catalyzes the hydrolysis of S-D-lactoyl-glutathione to form glutathione and D-lactic acid. The chain is Hydroxyacylglutathione hydrolase from Pseudomonas putida (strain ATCC 47054 / DSM 6125 / CFBP 8728 / NCIMB 11950 / KT2440).